Consider the following 777-residue polypeptide: Acyl-CoA dehydrogenase family member 11 (777 aa).

Residues phenylalanine 501–serine 511, alanine 509–serine 511, tryptophan 535–serine 537, and serine 537 each bind FAD. Serine 511 lines the substrate pocket. Glycine 626–arginine 629 serves as a coordination point for substrate. Residues arginine 654, glutamine 724, and glutamine 724–glycine 728 each bind FAD. Residue glycine 752 participates in substrate binding. FAD is bound by residues proline 753–glutamate 755 and glutamate 755.

Belongs to the acyl-CoA dehydrogenase family. In terms of assembly, homodimer. FAD is required as a cofactor.

It localises to the peroxisome. Its subcellular location is the mitochondrion membrane. The catalysed reaction is a 2,3-saturated acyl-CoA + oxidized [electron-transfer flavoprotein] + H(+) = a (2E)-enoyl-CoA + reduced [electron-transfer flavoprotein]. It catalyses the reaction docosanoyl-CoA + oxidized [electron-transfer flavoprotein] + H(+) = (2E)-docosenoyl-CoA + reduced [electron-transfer flavoprotein]. The enzyme catalyses tetracosanoyl-CoA + oxidized [electron-transfer flavoprotein] + H(+) = (2E)-tetracosenoyl-CoA + reduced [electron-transfer flavoprotein]. It carries out the reaction eicosanoyl-CoA + oxidized [electron-transfer flavoprotein] + H(+) = (2E)-eicosenoyl-CoA + reduced [electron-transfer flavoprotein]. The catalysed reaction is hexacosanoyl-CoA + oxidized [electron-transfer flavoprotein] + H(+) = (2E)-hexacosenoyl-CoA + reduced [electron-transfer flavoprotein]. It catalyses the reaction tricosanoyl-CoA + oxidized [electron-transfer flavoprotein] + H(+) = (2E)-tricosenoyl-CoA + reduced [electron-transfer flavoprotein]. It functions in the pathway lipid metabolism; fatty acid beta-oxidation. Its function is as follows. Acyl-CoA dehydrogenase, that exhibits maximal activity towards saturated C22-CoA. Probably participates in beta-oxydation and energy production but could also play a role in the metabolism of specific fatty acids to control fatty acids composition of cellular lipids in brain. This is Acyl-CoA dehydrogenase family member 11 (ACAD11) from Gallus gallus (Chicken).